Consider the following 156-residue polypeptide: Rhombotin-1 (156 aa).

LIM zinc-binding domains lie at 24–83 and 88–147; these read CAGC…RLFG and CAAC…EGQL.

Expressed mainly in the central nervous. Low level of expression in other tissues including thymus.

It localises to the nucleus. Its function is as follows. May be involved in gene regulation within neural lineage cells potentially by direct DNA binding or by binding to other transcription factors. The chain is Rhombotin-1 (LMO1) from Homo sapiens (Human).